The sequence spans 390 residues: Scoulerine-9-O-methyltransferase 1 (390 aa).

E153 contributes to the substrate binding site. S-adenosyl-L-methionine is bound by residues M207, S211, G235, D258, 278–279 (DM), and K292. H296 functions as the Proton acceptor in the catalytic mechanism. Position 296–297 (296–297 (HD)) interacts with substrate.

The protein belongs to the class I-like SAM-binding methyltransferase superfamily. Cation-independent O-methyltransferase family. COMT subfamily. As to quaternary structure, homodimer. In terms of tissue distribution, highly expressed in capsules. Expressed is stems. Expressed at low levels in roots.

It carries out the reaction (S)-scoulerine + S-adenosyl-L-methionine = (S)-tetrahydrocolumbamine + S-adenosyl-L-homocysteine + H(+). The catalysed reaction is (S)-tetrahydrocolumbamine + S-adenosyl-L-methionine = (S)-tetrahydropalmatine + S-adenosyl-L-homocysteine + H(+). The enzyme catalyses (S)-norreticuline + S-adenosyl-L-methionine = (S)-norcodamine + S-adenosyl-L-homocysteine + H(+). It catalyses the reaction (S)-reticuline + S-adenosyl-L-methionine = (S)-codamine + S-adenosyl-L-homocysteine + H(+). It functions in the pathway alkaloid biosynthesis. Its function is as follows. Methyltransferase involved in the biosynthesis of the benzylisoquinoline alkaloid noscapine. Catalyzes the conversion of (S)-scoulerine to (S)-tetrahydrocolumbamine. Can convert (S)-tetrahydrocolumbamine to tetrahydropalmatine. Can convert (S)-norreticuline to (S)-norcodamine. Can convert (S)-reticuline to (S)-codamine. Substrate preference is (S)-scoulerine &gt; (S)-tetrahydrocolumbamine &gt; (S)-norreticuline &gt; (S)-reticuline. The protein is Scoulerine-9-O-methyltransferase 1 of Papaver somniferum (Opium poppy).